Consider the following 345-residue polypeptide: Holliday junction branch migration complex subunit RuvB (345 aa).

The segment at 4–185 (TDRLIAPSTQ…FGIVSRLEFY (182 aa)) is large ATPase domain (RuvB-L). ATP-binding positions include L24, R25, G66, K69, T70, T71, 132–134 (EDY), R175, Y185, and R222. T70 is a Mg(2+) binding site. The segment at 186-256 (TADELARIVH…IADAALKMLD (71 aa)) is small ATPAse domain (RuvB-S). The segment at 259-345 (KLGFDVMDRK…KIGTGELWQQ (87 aa)) is head domain (RuvB-H). Residues R295, R314, and R319 each contribute to the DNA site.

This sequence belongs to the RuvB family. Homohexamer. Forms an RuvA(8)-RuvB(12)-Holliday junction (HJ) complex. HJ DNA is sandwiched between 2 RuvA tetramers; dsDNA enters through RuvA and exits via RuvB. An RuvB hexamer assembles on each DNA strand where it exits the tetramer. Each RuvB hexamer is contacted by two RuvA subunits (via domain III) on 2 adjacent RuvB subunits; this complex drives branch migration. In the full resolvosome a probable DNA-RuvA(4)-RuvB(12)-RuvC(2) complex forms which resolves the HJ.

It is found in the cytoplasm. It carries out the reaction ATP + H2O = ADP + phosphate + H(+). In terms of biological role, the RuvA-RuvB-RuvC complex processes Holliday junction (HJ) DNA during genetic recombination and DNA repair, while the RuvA-RuvB complex plays an important role in the rescue of blocked DNA replication forks via replication fork reversal (RFR). RuvA specifically binds to HJ cruciform DNA, conferring on it an open structure. The RuvB hexamer acts as an ATP-dependent pump, pulling dsDNA into and through the RuvAB complex. RuvB forms 2 homohexamers on either side of HJ DNA bound by 1 or 2 RuvA tetramers; 4 subunits per hexamer contact DNA at a time. Coordinated motions by a converter formed by DNA-disengaged RuvB subunits stimulates ATP hydrolysis and nucleotide exchange. Immobilization of the converter enables RuvB to convert the ATP-contained energy into a lever motion, pulling 2 nucleotides of DNA out of the RuvA tetramer per ATP hydrolyzed, thus driving DNA branch migration. The RuvB motors rotate together with the DNA substrate, which together with the progressing nucleotide cycle form the mechanistic basis for DNA recombination by continuous HJ branch migration. Branch migration allows RuvC to scan DNA until it finds its consensus sequence, where it cleaves and resolves cruciform DNA. The polypeptide is Holliday junction branch migration complex subunit RuvB (Methylobacillus flagellatus (strain ATCC 51484 / DSM 6875 / VKM B-1610 / KT)).